The primary structure comprises 490 residues: COP9 signalosome complex subunit 2 (490 aa).

Residues 1 to 30 (MSDDDFMQDSDQEYDFEYEDDEEEDTGDVD) are compositionally biased toward acidic residues. The segment at 1–32 (MSDDDFMQDSDQEYDFEYEDDEEEDTGDVDIE) is disordered. Residues 250-418 (SEENWKEAQS…GVLELESRED (169 aa)) form the PCI domain. Residues 469 to 490 (DTMRSMGSGKRGRRVGLTQRAY) form a disordered region.

This sequence belongs to the CSN2 family. Component of the COP9 signalosome (CSN) complex.

The protein resides in the cytoplasm. It is found in the nucleus. Functionally, component of the COP9 signalosome (CSN) complex that acts as an regulator of the ubiquitin (Ubl) conjugation pathway by mediating the deneddylation of the cullin subunit of SCF-type E3 ubiquitin-protein ligase complexes. The CSN complex is involved in the regulation of the circadian clock through its control of the stability of the SCF(FWD-1) complex. The sequence is that of COP9 signalosome complex subunit 2 (csn-2) from Neurospora crassa (strain ATCC 24698 / 74-OR23-1A / CBS 708.71 / DSM 1257 / FGSC 987).